A 1198-amino-acid chain; its full sequence is Fibronectin type-III domain-containing protein 3A (1198 aa).

The segment at Tyr-160–Leu-221 is disordered. The span at Val-163–Met-201 shows a compositional bias: basic and acidic residues. Positions Ser-202 to Pro-214 are enriched in low complexity. A phosphoserine mark is found at Ser-203, Ser-207, and Ser-213. Fibronectin type-III domains are found at residues Asn-268–Cys-369, Ile-373–Cys-465, Met-469–Asp-562, Ile-566–Val-660, Pro-664–Gly-757, Gln-761–Ser-851, Glu-861–Leu-950, Pro-951–Ser-1045, and Val-1046–Pro-1151. Lys-384 is subject to N6-acetyllysine. Residues Ile-1177–Ile-1197 form a helical membrane-spanning segment.

Belongs to the FNDC3 family. As to expression, expressed in the odontoblast and nerves in the dental pulp. Also expressed in trachea and to a lesser extent in the brain, liver, lung and kidney.

It is found in the golgi apparatus membrane. Functionally, mediates spermatid-Sertoli adhesion during spermatogenesis. The sequence is that of Fibronectin type-III domain-containing protein 3A (FNDC3A) from Homo sapiens (Human).